Reading from the N-terminus, the 260-residue chain is Phosphoribosylaminoimidazole-succinocarboxamide synthase (260 aa).

It belongs to the SAICAR synthetase family.

The enzyme catalyses 5-amino-1-(5-phospho-D-ribosyl)imidazole-4-carboxylate + L-aspartate + ATP = (2S)-2-[5-amino-1-(5-phospho-beta-D-ribosyl)imidazole-4-carboxamido]succinate + ADP + phosphate + 2 H(+). Its pathway is purine metabolism; IMP biosynthesis via de novo pathway; 5-amino-1-(5-phospho-D-ribosyl)imidazole-4-carboxamide from 5-amino-1-(5-phospho-D-ribosyl)imidazole-4-carboxylate: step 1/2. The polypeptide is Phosphoribosylaminoimidazole-succinocarboxamide synthase (Pelagibacter ubique (strain HTCC1062)).